Here is an 89-residue protein sequence, read N- to C-terminus: Small ribosomal subunit protein uS15 (89 aa).

This sequence belongs to the universal ribosomal protein uS15 family. As to quaternary structure, part of the 30S ribosomal subunit. Forms a bridge to the 50S subunit in the 70S ribosome, contacting the 23S rRNA.

In terms of biological role, one of the primary rRNA binding proteins, it binds directly to 16S rRNA where it helps nucleate assembly of the platform of the 30S subunit by binding and bridging several RNA helices of the 16S rRNA. Forms an intersubunit bridge (bridge B4) with the 23S rRNA of the 50S subunit in the ribosome. The chain is Small ribosomal subunit protein uS15 from Cereibacter sphaeroides (strain ATCC 17025 / ATH 2.4.3) (Rhodobacter sphaeroides).